The primary structure comprises 976 residues: Leucine--tRNA ligase (976 aa).

Residues 63–74 (PYPSGVGLHVGH) carry the 'HIGH' region motif. A 'KMSKS' region motif is present at residues 745–749 (KMGKS). Position 748 (K748) interacts with ATP.

It belongs to the class-I aminoacyl-tRNA synthetase family.

It is found in the cytoplasm. The enzyme catalyses tRNA(Leu) + L-leucine + ATP = L-leucyl-tRNA(Leu) + AMP + diphosphate. The sequence is that of Leucine--tRNA ligase from Corynebacterium jeikeium (strain K411).